We begin with the raw amino-acid sequence, 266 residues long: Lipooligosaccharide biosynthesis protein lic2B (266 aa).

This sequence belongs to the glycosyltransferase 25 family.

Its function is as follows. Involved in extracellular lipooligosaccharide (LOS) biosynthesis and virulence expression. Involved in the synthesis of the oligosaccharide moiety of the LOS molecule by adding GalNAc. This is Lipooligosaccharide biosynthesis protein lic2B (lic2B) from Haemophilus influenzae.